The sequence spans 553 residues: MMFPAVAAPPRRLPGERLQRSQNPVETSWLSFRILATRGPCVTSTFLFLTVAFLGLSWVSVAVAAHAEHPEDSATNFLFSFAENSLANREPPEDSAARPSSRSGGAERRRLDSLIPGFLKRRRIFKQLRPVDEFQLREFQEASSKVKAQFFSAGHSKVTFVDRPSAALLSFLHLEEEDVPYGVVIKAIPYDAFDFYESVAEPYIHRMFDDPRKFPYVVPVLAALRSTSKRVLYLVLPLYRELPETVDEEARSLDFVLLLAEMAMAVCQLHERNLAHRDLKEDNFLVSPEGHIVVSDLATLDITDNKSFLIGTSGYMPPETRSSYLLRKGYKRSRYGEKTDVYSLGVAFRHLAFMLEGLGVQVPHRTQLAKLIKKMTSPDPEKRPLIGEVMEDPFFASVDFRLVRQRAGKHPFKKLPGADLLAERQRARLEAREKADAAAKAADNAEVPAAKSPAGKTGGAGTLSGDRDRAGSGEKPAERAEEEKGRGRGAQTHEGNHDRTDDAGREELREGPGDQKPSGEENREGGQPPGQREEQREGTGLEEGFNKEDAQES.

Disordered regions lie at residues 1–20 (MMFP…RLQR) and 88–107 (NREP…GGAE). The signal sequence occupies residues 1–64 (MMFPAVAAPP…GLSWVSVAVA (64 aa)). The Protein kinase domain maps to 125 to 395 (FKQLRPVDEF…IGEVMEDPFF (271 aa)). K186 provides a ligand contact to ATP. D278 functions as the Proton acceptor in the catalytic mechanism. The disordered stretch occupies residues 432–553 (REKADAAAKA…GFNKEDAQES (122 aa)). Positions 438-451 (AAKAADNAEVPAAK) are enriched in low complexity. Composition is skewed to basic and acidic residues over residues 465–486 (GDRD…EKGR), 494–524 (EGNH…ENRE), and 531–553 (QREE…AQES).

It belongs to the protein kinase superfamily. STE Ser/Thr protein kinase family. WNG subfamily. The cofactor is Mg(2+).

It localises to the cytoplasmic granule. The protein localises to the secreted. The protein resides in the parasitophorous vacuole lumen. The enzyme catalyses L-seryl-[protein] + ATP = O-phospho-L-seryl-[protein] + ADP + H(+). It catalyses the reaction L-threonyl-[protein] + ATP = O-phospho-L-threonyl-[protein] + ADP + H(+). Probable serine/threonine-protein kinase. The sequence is that of Serine/threonine-protein kinase WNG2 from Toxoplasma gondii.